The chain runs to 171 residues: T-cell surface glycoprotein CD3 delta chain (171 aa).

The first 21 residues, 1-21 (MEHSTFLSGLVLATLLSQVSP), serve as a signal peptide directing secretion. Residues 22 to 105 (FKIPIEELED…CVELDPATVA (84 aa)) are Extracellular-facing. Cys-37 and Cys-73 are joined by a disulfide. 2 N-linked (GlcNAc...) asparagine glycosylation sites follow: Asn-38 and Asn-74. A helical membrane pass occupies residues 106 to 126 (GIIVTDVIATLLLALGVFCFA). The Cytoplasmic segment spans residues 127-171 (GHETGRLSGAADTQALLRNDQVYQPLRDRDDAQYSHLGGNWARNK). In terms of domain architecture, ITAM spans 138–166 (DTQALLRNDQVYQPLRDRDDAQYSHLGGN). A phosphotyrosine mark is found at Tyr-149 and Tyr-160.

The TCR-CD3 complex is composed of a CD3D/CD3E and a CD3G/CD3E heterodimers that preferentially associate with TCRalpha and TCRbeta, respectively, to form TCRalpha/CD3E/CD3G and TCRbeta/CD3G/CD3E trimers. In turn, the hexamer interacts with CD3Z homodimer to form the TCR-CD3 complex. Alternatively, TCRalpha and TCRbeta can be replaced by TCRgamma and TCRdelta. Interacts with coreceptors CD4 and CD8. Post-translationally, phosphorylated on Tyr residues after T-cell receptor triggering by LCK in association with CD4/CD8. As to expression, CD3D is mostly present on T-lymphocytes with its TCR-CD3 partners. Present also in fetal NK-cells.

Its subcellular location is the cell membrane. In terms of biological role, part of the TCR-CD3 complex present on T-lymphocyte cell surface that plays an essential role in adaptive immune response. When antigen presenting cells (APCs) activate T-cell receptor (TCR), TCR-mediated signals are transmitted across the cell membrane by the CD3 chains CD3D, CD3E, CD3G and CD3Z. All CD3 chains contain immunoreceptor tyrosine-based activation motifs (ITAMs) in their cytoplasmic domain. Upon TCR engagement, these motifs become phosphorylated by Src family protein tyrosine kinases LCK and FYN, resulting in the activation of downstream signaling pathways. In addition of this role of signal transduction in T-cell activation, CD3D plays an essential role in thymocyte differentiation. Indeed, participates in correct intracellular TCR-CD3 complex assembly and surface expression. In absence of a functional TCR-CD3 complex, thymocytes are unable to differentiate properly. Interacts with CD4 and CD8 and thus serves to establish a functional link between the TCR and coreceptors CD4 and CD8, which is needed for activation and positive selection of CD4 or CD8 T-cells. The polypeptide is T-cell surface glycoprotein CD3 delta chain (CD3D) (Homo sapiens (Human)).